The primary structure comprises 324 residues: Biotin synthase (324 aa).

Residues 42–269 enclose the Radical SAM core domain; sequence NEVQISSLLN…KSYIRLAAGR (228 aa). [4Fe-4S] cluster contacts are provided by Cys-57, Cys-61, and Cys-64. Cys-101, Cys-132, Cys-192, and Arg-264 together coordinate [2Fe-2S] cluster.

Belongs to the radical SAM superfamily. Biotin synthase family. Homodimer. Requires [4Fe-4S] cluster as cofactor. [2Fe-2S] cluster serves as cofactor.

It carries out the reaction (4R,5S)-dethiobiotin + (sulfur carrier)-SH + 2 reduced [2Fe-2S]-[ferredoxin] + 2 S-adenosyl-L-methionine = (sulfur carrier)-H + biotin + 2 5'-deoxyadenosine + 2 L-methionine + 2 oxidized [2Fe-2S]-[ferredoxin]. It participates in cofactor biosynthesis; biotin biosynthesis; biotin from 7,8-diaminononanoate: step 2/2. Functionally, catalyzes the conversion of dethiobiotin (DTB) to biotin by the insertion of a sulfur atom into dethiobiotin via a radical-based mechanism. This Ehrlichia canis (strain Jake) protein is Biotin synthase.